A 270-amino-acid polypeptide reads, in one-letter code: Dermonecrotic toxin LsaSicTox-alphaIB1av (270 aa).

The active site involves His2. Mg(2+)-binding residues include Glu22 and Asp24. His38 functions as the Nucleophile in the catalytic mechanism. Disulfide bonds link Cys42–Cys48 and Cys44–Cys187. Asp82 is a Mg(2+) binding site.

Belongs to the arthropod phospholipase D family. Class II subfamily. Mg(2+) serves as cofactor. Expressed by the venom gland.

The protein resides in the secreted. The enzyme catalyses an N-(acyl)-sphingosylphosphocholine = an N-(acyl)-sphingosyl-1,3-cyclic phosphate + choline. The catalysed reaction is an N-(acyl)-sphingosylphosphoethanolamine = an N-(acyl)-sphingosyl-1,3-cyclic phosphate + ethanolamine. It carries out the reaction a 1-acyl-sn-glycero-3-phosphocholine = a 1-acyl-sn-glycero-2,3-cyclic phosphate + choline. It catalyses the reaction a 1-acyl-sn-glycero-3-phosphoethanolamine = a 1-acyl-sn-glycero-2,3-cyclic phosphate + ethanolamine. Functionally, dermonecrotic toxins cleave the phosphodiester linkage between the phosphate and headgroup of certain phospholipids (sphingolipid and lysolipid substrates), forming an alcohol (often choline) and a cyclic phosphate. This toxin acts on sphingomyelin (SM). It may also act on ceramide phosphoethanolamine (CPE), lysophosphatidylcholine (LPC) and lysophosphatidylethanolamine (LPE), but not on lysophosphatidylserine (LPS), and lysophosphatidylglycerol (LPG). It acts by transphosphatidylation, releasing exclusively cyclic phosphate products as second products. Induces dermonecrosis, hemolysis, increased vascular permeability, edema, inflammatory response, and platelet aggregation. In Loxosceles sabina (Tucson recluse spider), this protein is Dermonecrotic toxin LsaSicTox-alphaIB1av.